We begin with the raw amino-acid sequence, 97 residues long: Class II hydrophobin 1 (97 aa).

The N-terminal stretch at 1–16 is a signal peptide; that stretch reads MKFFAIAALFAAAAVA. A propeptide spanning residues 17–22 is cleaved from the precursor; sequence QPLEDR. 4 cysteine pairs are disulfide-bonded: C30–C79, C40–C70, C41–C53, and C80–C91.

The protein belongs to the cerato-ulmin hydrophobin family. As to quaternary structure, homotetramer. Further self-assembles to form highly ordered films at water-air interfaces through intermolecular interactions.

The protein resides in the secreted. Its subcellular location is the cell wall. Its function is as follows. Aerial growth, conidiation, and dispersal of filamentous fungi in the environment rely upon a capability of their secreting small amphipathic proteins called hydrophobins (HPBs) with low sequence identity. Class I can self-assemble into an outermost layer of rodlet bundles on aerial cell surfaces, conferring cellular hydrophobicity that supports fungal growth, development and dispersal; whereas Class II form highly ordered films at water-air interfaces through intermolecular interactions but contribute nothing to the rodlet structure. Hbf1 is a class II hydrophobin that has a role in hyphal development and is in particular required for the formation of aerial hyphae. The chain is Class II hydrophobin 1 from Hypocrea jecorina (Trichoderma reesei).